The chain runs to 287 residues: Cbb3-type cytochrome c oxidase subunit FixP (287 aa).

The Cytoplasmic segment spans residues 1 to 33 (MSQKHIDELSGVETTGHEWDGIQELNNPMPRWW). A helical membrane pass occupies residues 34–54 (IWTFYVTILWAIGYAIAYPAI). Over 55 to 287 (PMITSATNGY…IFVHALGGGT (233 aa)) the chain is Periplasmic. Cytochrome c domains follow at residues 108-196 (FAIA…WGLT) and 203-284 (GLAA…HALG). Positions 121, 124, 125, 173, 216, 219, 220, and 261 each coordinate heme c.

It belongs to the CcoP / FixP family. As to quaternary structure, component of the cbb3-type cytochrome c oxidase at least composed of FixN, FixO, FixQ and FixP. It depends on heme c as a cofactor.

It is found in the cell inner membrane. The protein operates within energy metabolism; oxidative phosphorylation. C-type cytochrome. Part of the cbb3-type cytochrome c oxidase complex. FixP subunit is required for transferring electrons from donor cytochrome c via its heme groups to FixO subunit. From there, electrons are shuttled to the catalytic binuclear center of FixN subunit where oxygen reduction takes place. The complex also functions as a proton pump. The chain is Cbb3-type cytochrome c oxidase subunit FixP from Rhizobium etli (strain ATCC 51251 / DSM 11541 / JCM 21823 / NBRC 15573 / CFN 42).